We begin with the raw amino-acid sequence, 695 residues long: Elongation factor G (695 aa).

The tr-type G domain occupies Lys10–Leu289. GTP contacts are provided by residues Ala19–Thr26, Asp83–His87, and Asn137–Asp140.

Belongs to the TRAFAC class translation factor GTPase superfamily. Classic translation factor GTPase family. EF-G/EF-2 subfamily.

The protein resides in the cytoplasm. Catalyzes the GTP-dependent ribosomal translocation step during translation elongation. During this step, the ribosome changes from the pre-translocational (PRE) to the post-translocational (POST) state as the newly formed A-site-bound peptidyl-tRNA and P-site-bound deacylated tRNA move to the P and E sites, respectively. Catalyzes the coordinated movement of the two tRNA molecules, the mRNA and conformational changes in the ribosome. This Protochlamydia amoebophila (strain UWE25) protein is Elongation factor G.